The sequence spans 88 residues: Small ribosomal subunit protein bS16 (88 aa).

It belongs to the bacterial ribosomal protein bS16 family.

The sequence is that of Small ribosomal subunit protein bS16 from Anaeromyxobacter dehalogenans (strain 2CP-1 / ATCC BAA-258).